The sequence spans 123 residues: Small ribosomal subunit protein uS12cz/uS12cy (123 aa).

The protein belongs to the universal ribosomal protein uS12 family. Part of the 30S ribosomal subunit.

Its subcellular location is the plastid. The protein localises to the chloroplast. With S4 and S5 plays an important role in translational accuracy. Located at the interface of the 30S and 50S subunits. The chain is Small ribosomal subunit protein uS12cz/uS12cy (rps12-A) from Platanus occidentalis (Sycamore).